Here is a 566-residue protein sequence, read N- to C-terminus: Chondroitin sulfate proteoglycan 5 (566 aa).

The N-terminal stretch at 1-30 (MGRAGGGGPDWGPPPVLLLLGVTLVLTAGA) is a signal peptide. Residues 31–423 (VPARETGSAI…SIITDFQVMC (393 aa)) are Extracellular-facing. Residue serine 38 is glycosylated (O-linked (Xyl...) (chondroitin sulfate) serine). Residues 56 to 93 (ANDTREEAGLPAAGEDETSWTERGSEMAAVGPGVGPEE) are disordered. A glycan (N-linked (GlcNAc...) asparagine) is linked at asparagine 57. Residue threonine 76 is glycosylated (O-linked (GalNAc...) threonine). Serine 123 carries an O-linked (Xyl...) (chondroitin sulfate) serine glycan. Residue threonine 132 is glycosylated (O-linked (GalNAc...) threonine). 3 disordered regions span residues 137–173 (DEALGSSTMPPAIPEATETSGPPSPAVHDKPSVGPEL), 218–249 (DSEGRGADMGSFPGSPGTSENHPDTEGETPSW), and 263–327 (ESDF…PPQH). Residue serine 143 is glycosylated (O-linked (GalNAc...) serine). Threonine 144, threonine 153, and threonine 155 each carry an O-linked (GalNAc...) threonine glycan. 2 O-linked (GalNAc...) serine glycosylation sites follow: serine 156 and serine 160. Over residues 163 to 173 (VHDKPSVGPEL) the composition is skewed to basic and acidic residues. O-linked (GalNAc...) threonine glycosylation is present at threonine 235. The interaction with TNC and TNR stretch occupies residues 265–301 (DFYPTTSFYDDLEEEEEEEEDKDTVGGGDLEDENDLL). The segment covering 274–286 (DDLEEEEEEEEDK) has biased composition (acidic residues). N-linked (GlcNAc...) asparagine glycans are attached at residues asparagine 355 and asparagine 367. The EGF-like domain occupies 371–413 (RSVCDLFPSYCHNGGQCYLVENIGAFCRCNTQDYIWHKGMRCE). 3 cysteine pairs are disulfide-bonded: cysteine 374/cysteine 387, cysteine 381/cysteine 397, and cysteine 399/cysteine 412. 2 positions are modified to phosphoserine: glycine 394 and phenylalanine 396. A Phosphothreonine modification is found at cysteine 397. A helical transmembrane segment spans residues 424–444 (VAVGSAALVLLLLFMMTVFFA). The interaction with GOPC stretch occupies residues 442–460 (FFAKKLYLLKTENTKLRRT). The Cytoplasmic segment spans residues 445–566 (KKLYLLKTEN…GVNCLQNNLT (122 aa)). Phosphoserine is present on residues serine 467, serine 475, and serine 477. At threonine 478 the chain carries Phosphothreonine. Phosphoserine occurs at positions 483 and 543. The segment at 531–566 (KEEESFNIQNSMSPKLEGGKGDQDDLGVNCLQNNLT) is disordered.

In terms of assembly, binds TNR and probably TNC. Interacts with ERBB3 and GOPC. Interacts with MDK; this interaction is independent of the presence of chondroitin sulfate chains and promotes elongation of oligodendroglial precursor-like cells. In terms of processing, N-glycosylated. O-glycosylated; contains chondroitin sulfate glycans. Part-time proteoglycan, expressed in part as a proteoglycan exhibiting chondroitin sulfate glycans and in part as a non-proteoglycan form. The relative amount of both forms depends on tissues and tissue maturation. In the cerebellum the 2 forms coexist while in the cerebrum the proteoglycan form is predominant. Post-translationally, phosphorylated; in intracellular and extracellular parts. As to expression, expressed in olfactory bulb, hippocampus, brain stem, spinal cord, cerebrum and cerebellum. Expressed by Purkinje cells in the cerebellum (at protein level). Expressed in immature and mature cerebellum (isoform 1, isoform 2 and isoform 3).

The protein localises to the cell membrane. It is found in the synaptic cell membrane. Its subcellular location is the endoplasmic reticulum membrane. It localises to the golgi apparatus membrane. The protein resides in the cell surface. The protein localises to the secreted. In terms of biological role, may function as a growth and differentiation factor involved in neuritogenesis. May induce ERBB3 activation. The protein is Chondroitin sulfate proteoglycan 5 (Cspg5) of Mus musculus (Mouse).